The primary structure comprises 322 residues: Corticotropin-releasing factor-binding protein (322 aa).

An N-terminal signal peptide occupies residues 1 to 24 (MSPNFKLQCHFTLILLTALRGESR). Disulfide bonds link C60-C81, C104-C141, C183-C205, C237-C264, and C277-C318. N-linked (GlcNAc...) asparagine glycosylation occurs at N204.

It belongs to the CRF-binding protein family.

Its subcellular location is the secreted. Its function is as follows. Binds CRF and inactivates it. May prevent inappropriate pituitary-adrenal stimulation in pregnancy. The polypeptide is Corticotropin-releasing factor-binding protein (Crhbp) (Rattus norvegicus (Rat)).